The sequence spans 614 residues: FAD-dependent monooxygenase terD (614 aa).

The N-terminal stretch at 1–23 is a signal peptide; that stretch reads MSSKFDVVICGSGTAGLAAATWL. FAD contacts are provided by residues 6–35, Gln-44, Val-137, and 239–241; these read DVVI…ILES and RVY. An N-linked (GlcNAc...) asparagine glycan is attached at Asn-260. Tyr-282 and Asp-303 together coordinate FAD. Asn-317 is a glycosylation site (N-linked (GlcNAc...) asparagine). Ser-319 contributes to the FAD binding site. Residue Asn-602 is glycosylated (N-linked (GlcNAc...) asparagine).

This sequence belongs to the PheA/TfdB FAD monooxygenase family. Requires FAD as cofactor.

Its pathway is secondary metabolite biosynthesis. Functionally, FAD-dependent monooxygenase; part of the gene cluster that mediates the biosynthesis of terrein, a fungal metabolite with ecological, antimicrobial, antiproliferative, and antioxidative activities. The first step in the pathway is performed by the polyketide synthase terA that produces 4-hydroxy-6-methylpyranon (4-HMP), orsellinic acid (OA), and 2,3-dehydro-6-hydroxymellein (2,3-dehydro-6-HM) by condensing acetyl-CoA with two, three, or four malonyl-CoA units, respectively. 4-HMP and OA are not pathway intermediates, but are rather shunt or side products. 2,3-dehydro-6-HM is further converted to 6-hydroxymellein (6-HM) by the 6-hydroxymellein synthase terB. The monooxygenases terC and terD, the multicopper oxidase terE and the Kelch-like protein terF are then involved in the transformation of 6-HM to terrein. Even if they are co-regulated with the other terrein cluster genes, terH and terI seem to be dispensable for terrein production; whereas one or both of the 2 transporters terG and terJ are probably required for efficient secretion of metabolites. The protein is FAD-dependent monooxygenase terD of Aspergillus terreus (strain NIH 2624 / FGSC A1156).